The sequence spans 49 residues: Large ribosomal subunit protein bL32 (49 aa).

It belongs to the bacterial ribosomal protein bL32 family.

This is Large ribosomal subunit protein bL32 from Nautilia profundicola (strain ATCC BAA-1463 / DSM 18972 / AmH).